Reading from the N-terminus, the 509-residue chain is Maturase K (509 aa).

The protein belongs to the intron maturase 2 family. MatK subfamily.

It localises to the plastid. It is found in the chloroplast. Its function is as follows. Usually encoded in the trnK tRNA gene intron. Probably assists in splicing its own and other chloroplast group II introns. This Banksia cuneata (Quairading banksia) protein is Maturase K.